The following is a 777-amino-acid chain: MTAGSVCVPQIIPLRVPQPGKANHEIDNNTLLEMKSDTPDVNIYYTLDGSKPEFLKRTGYVENNTFKYTKPITLPDGKIQVKAIAVSKDCRQSGIVTKVFQVGYEPPNVVSPEDNVENVLKDSSRQEFKNGLVGSKLKKKYQNSENQRSWNVNLRKFPDLQVGERTDPKTLKDLRFSESPLEIPAHSGGSGSRPPTRQSQSPGFAHISGLKCLTSTEIMRIQRETDFLKCAHCLAPRPSDPFARFCQECGSPVPPIFGCRLPPPEGAQMGLCAECRSLVPMNTPICVVCEAPLALQLQPQASLHLKEKVICRACGTGNPAHLRYCVTCEGALPSSQESICSGDKASPLPTQKGGTISCSRCGRWNLWEASFCGWCGAMLGIPAGCSVCPKCGASNHLSARFCGSCGICVKSLVKLSLDRSLALAAQEPRPFSEPQCAWQSLNIPLPRSDAGTKRDIGTQTVGLFYPSGKLLAKKELEIASQKQRQEKMSDHKPLLTAISPGRGYWRRQLDHISAHLRCYAQNNPEFRALIAEPRMGKLISATVHEDGCEVSIRLNYSQVSNKNLYLNKAVNFSDHLLSSAAEGDGGLCGSRSSWVSDYSQSTSDTIEKIKRIRNFKTKTFQEKEEQLLPENRLLLKEVGPTGEGRVSVIEQLLDEGADPNCCDEDNRPVITVAVMNKHHEAIPVLVQRGADIDQQWGPLRNTALHEATLLGFAGRESIATLLGCNASIRKKNAGGQTAYDLALNTGDDLITSLFAAKFGQGLEDQLAQTRSLRLDDC.

Basic and acidic residues predominate over residues 161–176; sequence QVGERTDPKTLKDLRF. Positions 161 to 202 are disordered; that stretch reads QVGERTDPKTLKDLRFSESPLEIPAHSGGSGSRPPTRQSQSP. The segment covering 193–202 has biased composition (polar residues); the sequence is RPPTRQSQSP. At Ser201 the chain carries Phosphoserine. 2 consecutive DZANK-type zinc fingers follow at residues 230–289 and 358–406; these read CAHC…CVVC and CSRC…GSCG. 2 ANK repeats span residues 442–473 and 477–506; these read NIPLPRSDAGTKRDIGTQTVGLFYPSGKLLAK and EIASQKQRQEKMSDHKPLLTAISPGRGYWR.

As to quaternary structure, interacts with NINL. Associates with DYNC1H1 and multiple dynein intermediate and light chains as well as actin-binding proteins.

It is found in the cytoplasm. It localises to the cytoskeleton. The protein resides in the microtubule organizing center. The protein localises to the centrosome. Its subcellular location is the cilium basal body. Involved in vesicle transport in photoreceptor cells. The polypeptide is Double zinc ribbon and ankyrin repeat-containing protein 1 (DZANK1) (Macaca fascicularis (Crab-eating macaque)).